A 204-amino-acid chain; its full sequence is Glycerol-3-phosphate acyltransferase (204 aa).

5 helical membrane passes run 8–28 (ILIF…CYIF), 53–73 (VPAA…VVIA), 81–101 (FITA…IFFG), 116–136 (FGFS…VAII), and 155–175 (VIFT…IIIL).

Belongs to the PlsY family. Probably interacts with PlsX.

Its subcellular location is the cell inner membrane. The enzyme catalyses an acyl phosphate + sn-glycerol 3-phosphate = a 1-acyl-sn-glycero-3-phosphate + phosphate. It participates in lipid metabolism; phospholipid metabolism. Its function is as follows. Catalyzes the transfer of an acyl group from acyl-phosphate (acyl-PO(4)) to glycerol-3-phosphate (G3P) to form lysophosphatidic acid (LPA). This enzyme utilizes acyl-phosphate as fatty acyl donor, but not acyl-CoA or acyl-ACP. In Francisella tularensis subsp. holarctica (strain FTNF002-00 / FTA), this protein is Glycerol-3-phosphate acyltransferase.